Consider the following 68-residue polypeptide: Beta-defensin 1 (68 aa).

The signal sequence occupies residues 1–21 (MRTSYLLLFTLCLLLSEIASG). Residues 22–32 (GNFLTGLGHRS) constitute a propeptide that is removed on maturation. 3 disulfide bridges follow: Cys37-Cys66, Cys44-Cys59, and Cys49-Cys67.

Belongs to the beta-defensin family. As to quaternary structure, monomer. Homodimer.

The protein localises to the secreted. The protein resides in the membrane. In terms of biological role, has bactericidal activity. May act as a ligand for C-C chemokine receptor CCR6. Positively regulates the sperm motility and bactericidal activity in a CCR6-dependent manner. Binds to CCR6 and triggers Ca2+ mobilization in the sperm which is important for its motility. The polypeptide is Beta-defensin 1 (DEFB1) (Gorilla gorilla gorilla (Western lowland gorilla)).